Consider the following 347-residue polypeptide: NADH-quinone oxidoreductase subunit H (347 aa).

A run of 9 helical transmembrane segments spans residues 13-33 (LIIA…VAYL), 50-70 (PNVV…KFVF), 82-102 (GVFL…WAVI), 115-135 (VGIL…IMGG), 161-181 (IGFV…TDIV), 198-218 (FLDW…ISAL), 248-268 (FLLF…LMTV), 286-306 (VPGI…FAMV), and 325-345 (VFLP…KVFG).

The protein belongs to the complex I subunit 1 family. In terms of assembly, NDH-1 is composed of 14 different subunits. Subunits NuoA, H, J, K, L, M, N constitute the membrane sector of the complex.

Its subcellular location is the cell inner membrane. The catalysed reaction is a quinone + NADH + 5 H(+)(in) = a quinol + NAD(+) + 4 H(+)(out). NDH-1 shuttles electrons from NADH, via FMN and iron-sulfur (Fe-S) centers, to quinones in the respiratory chain. The immediate electron acceptor for the enzyme in this species is believed to be ubiquinone. Couples the redox reaction to proton translocation (for every two electrons transferred, four hydrogen ions are translocated across the cytoplasmic membrane), and thus conserves the redox energy in a proton gradient. This subunit may bind ubiquinone. The protein is NADH-quinone oxidoreductase subunit H of Brucella ovis (strain ATCC 25840 / 63/290 / NCTC 10512).